We begin with the raw amino-acid sequence, 203 residues long: Non-histone protein 10 (203 aa).

An N-acetylserine modification is found at serine 2. Disordered stretches follow at residues 78 to 97 and 161 to 203; these read KSKT…PKRP and ISNI…VSSN. Positions 94-158 form a DNA-binding region, HMG box; it reads PKRPTNAYLL…RYQMEMEIYN (65 aa).

Component of the chromatin-remodeling INO80 complex, at least composed of ARP4, ARP5, ARP8, RVB1, RVB2, TAF14, NHP10, IES1, IES3, IES4, IES6, ACT1, IES2, IES5 and INO80.

It localises to the nucleus. In terms of biological role, probably involved in transcription regulation via its interaction with the INO80 complex, a chromatin remodeling complex. The protein is Non-histone protein 10 (NHP10) of Saccharomyces cerevisiae (strain ATCC 204508 / S288c) (Baker's yeast).